A 532-amino-acid polypeptide reads, in one-letter code: Glucose-6-phosphate isomerase (532 aa).

Glu330 functions as the Proton donor in the catalytic mechanism. Residues His359 and Lys461 contribute to the active site.

The protein belongs to the GPI family.

It is found in the cytoplasm. It catalyses the reaction alpha-D-glucose 6-phosphate = beta-D-fructose 6-phosphate. It participates in carbohydrate biosynthesis; gluconeogenesis. It functions in the pathway carbohydrate degradation; glycolysis; D-glyceraldehyde 3-phosphate and glycerone phosphate from D-glucose: step 2/4. In terms of biological role, catalyzes the reversible isomerization of glucose-6-phosphate to fructose-6-phosphate. This is Glucose-6-phosphate isomerase from Synechococcus sp. (strain CC9902).